Reading from the N-terminus, the 1337-residue chain is Partitioning defective 3 homolog (1337 aa).

Ser25 carries the phosphoserine modification. Disordered stretches follow at residues 81–109 (EQDP…SELG) and 143–263 (SSDP…LENM). A Phosphothreonine modification is found at Thr91. The segment covering 91 to 100 (TSASSTGTQS) has biased composition (low complexity). 2 stretches are compositionally biased toward polar residues: residues 150–163 (GLST…FSSE) and 171–188 (TRWS…TGSP). Phosphoserine occurs at positions 156 and 174. Residues 190 to 203 (TCDRKKDENYRSLP) are compositionally biased toward basic and acidic residues. Positions 207–224 (SSWSNQFQRDNARSSLSA) are enriched in polar residues. The region spanning 271–359 (MVKLVQVPND…ARVIWFHVVP (89 aa)) is the PDZ 1 domain. Ser383 carries the phosphoserine modification. The tract at residues 397 to 441 (NAPQALPRAPRLSQPPEQLDAHPRLPHSAHASTKPPTAPALAPPN) is disordered. 2 PDZ domains span residues 461–546 (NIQL…LVFR) and 590–677 (EVPL…GMIQ). The residue at position 489 (Tyr489) is a Phosphotyrosine. Residues Ser692, Ser695, Ser715, Ser728, Ser809, and Ser827 each carry the phosphoserine modification. The interaction with PRKCI and PRKCZ stretch occupies residues 712-936 (RRISHSLYSG…AAIDKSYDKP (225 aa)). An N6-acetyllysine modification is found at Lys834. The residue at position 837 (Ser837) is a Phosphoserine. Lys851 is subject to N6-acetyllysine. Phosphoserine is present on residues Ser852 and Ser873. 5 disordered regions span residues 866-888 (VDDQ…KKSS), 932-1015 (SYDK…AKKG), 1028-1055 (KHRK…DRVR), 1110-1271 (LNAR…LGGH), and 1284-1337 (LLRQ…PFYS). Lys885 carries the N6-acetyllysine modification. Residues 935–1337 (KPMVDDDDEG…TPEKGRPFYS (403 aa)) are interaction with FRMD4A. Acidic residues predominate over residues 939–953 (DDDDEGMETLEEDTE). Ser962 is subject to Phosphoserine; by AURKA. 2 positions are modified to phosphoserine: Ser971 and Ser973. Composition is skewed to basic and acidic residues over residues 981–1009 (DPEK…EKDK) and 1030–1043 (RKDD…RIKI). Ser1046 carries the post-translational modification Phosphoserine. A coiled-coil region spans residues 1050–1082 (EEDRVRMKEEQERIQAKTREFRERQARERDYAE). Positions 1138-1147 (PGDSNRSTPS) are enriched in polar residues. Basic and acidic residues predominate over residues 1148–1175 (NHDRIQRLRQEFQQAKQDEDVEDRRRTY). Coiled coils occupy residues 1149-1172 (HDRI…EDRR), 1199-1222 (VQVQ…YSSL), and 1278-1299 (MLET…LKKQ). A compositionally biased stretch (low complexity) spans 1180-1203 (SWSSSRPASQSGRHSVSVEVQVQR). Residues 1219 to 1240 (YSSLPRQSRKNASSVSQDSWEQ) are compositionally biased toward polar residues. Positions 1284–1296 (LLRQEQRRKEQQL) are enriched in basic and acidic residues. Residues 1318 to 1327 (SQVARLNRLQ) show a composition bias toward polar residues. Residues 1328–1337 (TPEKGRPFYS) show a composition bias toward basic and acidic residues. N6-acetyllysine is present on Lys1331.

The protein belongs to the PAR3 family. As to quaternary structure, component of a complex whose core is composed of ARHGAP17, AMOT, PALS1, PATJ and PARD3/PAR3. Interacts (via PDZ 1 domain) with PARD6A, PARD6B and F11R/JAM1. Interacts with AURKA, AURKB and SIRT2. Interacts with PRKCI. Interacts with PRKCZ. Part of a complex with PARD6A or PARD6B, PRKCI or PRKCZ and CDC42 or RAC1. Interacts with LIMK2 and CDH5. Component of the Par polarity complex, composed of at least phosphorylated PRKCZ, PARD3 and TIAM1. Directly interacts with TIAM1 and TIAM2. Interacts with ECT2 and FBF1. Interacts (via PDZ 3 domain) with PTEN (via C-terminus). Interacts (via coiled-coil domain) with FRMD4A. Found in a complex with PARD3, CYTH1 and FRMD4A. Interacts with SAPCD2. Interacts with PRKCA. In terms of assembly, interacts with PRKCZ. Post-translationally, acetylated. Deacetylated by SIRT2, thereby inhibiting Schwann cell peripheral myelination. Phosphorylation at Ser-827 by PRKCZ and PRKCI occurs at the most apical tip of epithelial cell-cell contacts during the initial phase of tight junction formation and may promote dissociation of the complex with PARD6. EGF-induced Tyr-1127 phosphorylation mediates dissociation from LIMK2. Phosphorylation by AURKA at Ser-962 is required for the normal establishment of neuronal polarity. As to expression, isoform 1 is predominantly expressed in lung, glandular stomach, prostate, ovary and uterus. Isoform 1 is also expressed in brain, with a high expression in the cortex, hippocampus and in the striatum. Isoform 2 is predominantly expressed in intestinal epithelial cells, kidney and prostate.

It is found in the cytoplasm. The protein localises to the endomembrane system. Its subcellular location is the cell junction. It localises to the tight junction. The protein resides in the adherens junction. It is found in the cell cortex. The protein localises to the cytoskeleton. Its subcellular location is the cell membrane. Functionally, adapter protein involved in asymmetrical cell division and cell polarization processes. Seems to play a central role in the formation of epithelial tight junctions. Association with PARD6B may prevent the interaction of PARD3 with F11R/JAM1, thereby preventing tight junction assembly. The PARD6-PARD3 complex links GTP-bound Rho small GTPases to atypical protein kinase C proteins. Required for establishment of neuronal polarity and normal axon formation in cultured hippocampal neurons. Involved in Schwann cell peripheral myelination. Targets the phosphatase PTEN to cell junctions. This Rattus norvegicus (Rat) protein is Partitioning defective 3 homolog (Pard3).